Here is a 523-residue protein sequence, read N- to C-terminus: Putative L-type lectin-domain containing receptor kinase V.6 (523 aa).

The signal sequence occupies residues 1–27 (MFSEVKVLQIVLVQWLTLFSFTYNSHG). The interval 28-242 (TYILDGSAVF…TGSIRALHYM (215 aa)) is legume-lectin like. Residues 28–279 (TYILDGSAVF…KPSDRLRTVL (252 aa)) are Extracellular-facing. N47, N59, N112, and N171 each carry an N-linked (GlcNAc...) asparagine glycan. Residues 280–300 (AVCLTLALFAVFLASGIGFVF) traverse the membrane as a helical segment. The Cytoplasmic portion of the chain corresponds to 301-523 (YLRHKKVKEV…TGRAVRVKFF (223 aa)). One can recognise a Protein kinase domain in the interval 335–523 (FKEKQLLGKG…TGRAVRVKFF (189 aa)). Residues 341 to 349 (LGKGGFGQV) and K364 each bind ATP. D464 (proton acceptor) is an active-site residue.

The protein in the C-terminal section; belongs to the protein kinase superfamily. Ser/Thr protein kinase family. This sequence in the N-terminal section; belongs to the leguminous lectin family.

It localises to the cell membrane. It catalyses the reaction L-seryl-[protein] + ATP = O-phospho-L-seryl-[protein] + ADP + H(+). The catalysed reaction is L-threonyl-[protein] + ATP = O-phospho-L-threonyl-[protein] + ADP + H(+). The chain is Putative L-type lectin-domain containing receptor kinase V.6 (LECRK56) from Arabidopsis thaliana (Mouse-ear cress).